An 851-amino-acid polypeptide reads, in one-letter code: ATP-dependent DNA helicase DDX31 (851 aa).

The disordered stretch occupies residues 1–196 (MAPDLASQRH…STSDRNQEER (196 aa)). The Q motif motif lies at 230–259 (AAFHELGLHPHLISTINTVLKMSSMTSVQK). The region spanning 262–443 (IPVLLEGRDA…DISLHDPVSI (182 aa)) is the Helicase ATP-binding domain. Position 275–282 (275–282 (SQTGSGKT)) interacts with ATP. Residues 388-391 (DEAD) carry the DEAD box motif. One can recognise a Helicase C-terminal domain in the interval 480–659 (SLKQHVTVVP…VSEIKMEDIL (180 aa)). Disordered stretches follow at residues 762–784 (KKRKAHVKRPDLHKKTQSKHSLA) and 804–851 (KQNA…SQKV). An Omega-N-methylarginine modification is found at R828. Residues 841-851 (VQRDSKTSQKV) show a composition bias toward basic and acidic residues.

This sequence belongs to the DEAD box helicase family. DDX31/DBP7 subfamily. As to quaternary structure, interacts with NPM1; this interaction prevents interaction between NPM1 and HDM2. As to expression, weakly or undetectably expressed in normal organs. Up-regulated in renal cell carcinoma.

It is found in the nucleus. It localises to the nucleolus. It carries out the reaction ATP + H2O = ADP + phosphate + H(+). Functionally, may have DNA helicase activity and RNA helicase activity. Probably have ssDNA and RNA dependent ATPase activity. Plays a role in ribosome biogenesis and TP53/p53 regulation through its interaction with NPM1. The protein is ATP-dependent DNA helicase DDX31 of Homo sapiens (Human).